The primary structure comprises 160 residues: MLKFLSTKCKQFNSLNHIIKHKIYFPSKSNKSYFSSSVKDVEKKNKEPIIQLTNDAINKMKEINLKYKNSKALKVCVEAGGCSGFQYSFSLIDKNKIKDKEQIVYDKDCIVVIDKQVIDILKNSKIHYINNLISKKFTIENIQNISSKCSCGNSFDIDFV.

This sequence belongs to the HesB/IscA family. As to quaternary structure, tetramer.

The protein localises to the mitochondrion. It functions in the pathway cofactor biosynthesis; iron-sulfur cluster biosynthesis. Participates in iron-sulfur cluster formation (ISC) pathway for iron-sulfur (Fe-S) cluster biogenesis. Can bind iron and [4Fe-4S] clusters. May function as an iron chaperone. The polypeptide is Iron-sulfur assembly protein IscA1 (Plasmodium falciparum (isolate 3D7)).